Consider the following 104-residue polypeptide: Small integral membrane protein 19 (104 aa).

A helical transmembrane segment spans residues 20–42 (AWNEATNVYLLVILVSFALLMYA).

This sequence belongs to the SMIM19 family.

The protein localises to the membrane. The polypeptide is Small integral membrane protein 19 (smim19) (Danio rerio (Zebrafish)).